The sequence spans 82 residues: UPF0291 protein LJ_1507 (82 aa).

The tract at residues 61 to 82 (DGKEVTSEKAKEAQRRKGLRKD) is disordered.

Belongs to the UPF0291 family.

The protein localises to the cytoplasm. This chain is UPF0291 protein LJ_1507, found in Lactobacillus johnsonii (strain CNCM I-12250 / La1 / NCC 533).